Here is a 143-residue protein sequence, read N- to C-terminus: Ribonuclease P protein component 2 (143 aa).

Belongs to the eukaryotic/archaeal RNase P protein component 2 family. In terms of assembly, consists of a catalytic RNA component and at least 4-5 protein subunits.

It is found in the cytoplasm. The enzyme catalyses Endonucleolytic cleavage of RNA, removing 5'-extranucleotides from tRNA precursor.. Part of ribonuclease P, a protein complex that generates mature tRNA molecules by cleaving their 5'-ends. This is Ribonuclease P protein component 2 from Saccharolobus islandicus (strain Y.N.15.51 / Yellowstone #2) (Sulfolobus islandicus).